Consider the following 524-residue polypeptide: Indoleacetamide hydrolase (524 aa).

Composition is skewed to basic residues over residues 1–26 (MAKK…KATA) and 34–54 (AAKK…RRPK). Residues 1 to 56 (MAKKTASKKKSVSRKVTKTSSKKATARKGAVAKAAKKSVKKAAPRKSATARRPKGP) form a disordered region. Catalysis depends on charge relay system residues lysine 133 and serine 208. Serine 232 functions as the Acyl-ester intermediate in the catalytic mechanism.

Belongs to the amidase family.

The protein operates within plant hormone metabolism; auxin biosynthesis. In terms of biological role, hydrolyzes indole-3-acetamide (IAM) into indole-3-acetic acid (IAA). This is Indoleacetamide hydrolase (bam) from Bradyrhizobium diazoefficiens (strain JCM 10833 / BCRC 13528 / IAM 13628 / NBRC 14792 / USDA 110).